The following is a 374-amino-acid chain: Eukaryotic translation initiation factor 3 subunit M (374 aa).

Ser-2 is subject to N-acetylserine. Phosphoserine occurs at positions 2 and 152. Residues 180–339 (AASKVMVELL…RKVVVSHSTH (160 aa)) form the PCI domain. An N6-acetyllysine modification is found at Lys-254. Ser-367 is modified (phosphoserine).

This sequence belongs to the eIF-3 subunit M family. Component of the eukaryotic translation initiation factor 3 (eIF-3) complex, which is composed of 13 subunits: EIF3A, EIF3B, EIF3C, EIF3D, EIF3E, EIF3F, EIF3G, EIF3H, EIF3I, EIF3J, EIF3K, EIF3L and EIF3M. The eIF-3 complex appears to include 3 stable modules: module A is composed of EIF3A, EIF3B, EIF3G and EIF3I; module B is composed of EIF3F, EIF3H, and EIF3M; and module C is composed of EIF3C, EIF3D, EIF3E, EIF3K and EIF3L. EIF3C of module C binds EIF3B of module A and EIF3H of module B, thereby linking the three modules. EIF3J is a labile subunit that binds to the eIF-3 complex via EIF3B. The eIF-3 complex interacts with RPS6KB1 under conditions of nutrient depletion. Mitogenic stimulation leads to binding and activation of a complex composed of MTOR and RPTOR, leading to phosphorylation and release of RPS6KB1 and binding of EIF4B to eIF-3.

The protein localises to the cytoplasm. Functionally, component of the eukaryotic translation initiation factor 3 (eIF-3) complex, which is required for several steps in the initiation of protein synthesis. The eIF-3 complex associates with the 40S ribosome and facilitates the recruitment of eIF-1, eIF-1A, eIF-2:GTP:methionyl-tRNAi and eIF-5 to form the 43S pre-initiation complex (43S PIC). The eIF-3 complex stimulates mRNA recruitment to the 43S PIC and scanning of the mRNA for AUG recognition. The eIF-3 complex is also required for disassembly and recycling of post-termination ribosomal complexes and subsequently prevents premature joining of the 40S and 60S ribosomal subunits prior to initiation. The eIF-3 complex specifically targets and initiates translation of a subset of mRNAs involved in cell proliferation, including cell cycling, differentiation and apoptosis, and uses different modes of RNA stem-loop binding to exert either translational activation or repression. The chain is Eukaryotic translation initiation factor 3 subunit M from Pongo abelii (Sumatran orangutan).